The primary structure comprises 164 residues: MGKGGGKKSAAARAAANRLLADNRLARHQYEILETLETGIELLGTEVKSVRAGQANLRDGFCLIRRGELHLHNVHISPHTHASRYFNHDPLRVRRLLAHRREIDKLRGHLEQKGLTLIPLNLHLQGSWIKVTIGLGKGRKLHDKRAAAKDKQVKKETRDAIARY.

It belongs to the SmpB family.

The protein localises to the cytoplasm. Functionally, required for rescue of stalled ribosomes mediated by trans-translation. Binds to transfer-messenger RNA (tmRNA), required for stable association of tmRNA with ribosomes. tmRNA and SmpB together mimic tRNA shape, replacing the anticodon stem-loop with SmpB. tmRNA is encoded by the ssrA gene; the 2 termini fold to resemble tRNA(Ala) and it encodes a 'tag peptide', a short internal open reading frame. During trans-translation Ala-aminoacylated tmRNA acts like a tRNA, entering the A-site of stalled ribosomes, displacing the stalled mRNA. The ribosome then switches to translate the ORF on the tmRNA; the nascent peptide is terminated with the 'tag peptide' encoded by the tmRNA and targeted for degradation. The ribosome is freed to recommence translation, which seems to be the essential function of trans-translation. In Synechococcus sp. (strain CC9311), this protein is SsrA-binding protein.